A 309-amino-acid chain; its full sequence is NAD kinase (309 aa).

D89 acts as the Proton acceptor in catalysis. NAD(+) is bound by residues 89–90 (DG), 163–164 (NE), R191, D193, and 204–209 (TAYSLS).

Belongs to the NAD kinase family. The cofactor is a divalent metal cation.

The protein localises to the cytoplasm. It catalyses the reaction NAD(+) + ATP = ADP + NADP(+) + H(+). In terms of biological role, involved in the regulation of the intracellular balance of NAD and NADP, and is a key enzyme in the biosynthesis of NADP. Catalyzes specifically the phosphorylation on 2'-hydroxyl of the adenosine moiety of NAD to yield NADP. The sequence is that of NAD kinase from Shewanella halifaxensis (strain HAW-EB4).